The chain runs to 249 residues: (2S)-[(R)-hydroxy(phenyl)methyl]succinyl-CoA dehydrogenase subunit BbsC (249 aa).

It belongs to the short-chain dehydrogenases/reductases (SDR) family. As to quaternary structure, heterotetramer composed of 2 inactive BbsC subunits and 2 active BbsD subunits.

Its pathway is xenobiotic degradation; toluene degradation. Involved in an anaerobic toluene degradation pathway. Catalytically inactive subunit, which is probably required for the structural and/or regulatory integrity of the catalytic subunit BbsD. This subunit cannot bind NAD(+) or substrate. In Thauera aromatica, this protein is (2S)-[(R)-hydroxy(phenyl)methyl]succinyl-CoA dehydrogenase subunit BbsC.